The chain runs to 251 residues: 5-oxoprolinase subunit A (251 aa).

Belongs to the LamB/PxpA family. As to quaternary structure, forms a complex composed of PxpA, PxpB and PxpC.

It catalyses the reaction 5-oxo-L-proline + ATP + 2 H2O = L-glutamate + ADP + phosphate + H(+). Functionally, catalyzes the cleavage of 5-oxoproline to form L-glutamate coupled to the hydrolysis of ATP to ADP and inorganic phosphate. The chain is 5-oxoprolinase subunit A from Tolumonas auensis (strain DSM 9187 / NBRC 110442 / TA 4).